Here is a 717-residue protein sequence, read N- to C-terminus: Ribosomal RNA large subunit methyltransferase K/L (717 aa).

Positions 45–142 (GAYRICLGSR…DKRSGVQTVQ (98 aa)) constitute a THUMP domain.

This sequence belongs to the methyltransferase superfamily. RlmKL family.

It is found in the cytoplasm. The enzyme catalyses guanosine(2445) in 23S rRNA + S-adenosyl-L-methionine = N(2)-methylguanosine(2445) in 23S rRNA + S-adenosyl-L-homocysteine + H(+). It catalyses the reaction guanosine(2069) in 23S rRNA + S-adenosyl-L-methionine = N(2)-methylguanosine(2069) in 23S rRNA + S-adenosyl-L-homocysteine + H(+). Its function is as follows. Specifically methylates the guanine in position 2445 (m2G2445) and the guanine in position 2069 (m7G2069) of 23S rRNA. In Hahella chejuensis (strain KCTC 2396), this protein is Ribosomal RNA large subunit methyltransferase K/L.